The primary structure comprises 94 residues: Co-chaperonin GroES (94 aa).

This sequence belongs to the GroES chaperonin family. As to quaternary structure, heptamer of 7 subunits arranged in a ring. Interacts with the chaperonin GroEL.

Its subcellular location is the cytoplasm. In terms of biological role, together with the chaperonin GroEL, plays an essential role in assisting protein folding. The GroEL-GroES system forms a nano-cage that allows encapsulation of the non-native substrate proteins and provides a physical environment optimized to promote and accelerate protein folding. GroES binds to the apical surface of the GroEL ring, thereby capping the opening of the GroEL channel. The sequence is that of Co-chaperonin GroES from Desulfitobacterium hafniense (strain DSM 10664 / DCB-2).